The chain runs to 225 residues: Leucyl/phenylalanyl-tRNA--protein transferase (225 aa).

This sequence belongs to the L/F-transferase family.

The protein localises to the cytoplasm. The catalysed reaction is N-terminal L-lysyl-[protein] + L-leucyl-tRNA(Leu) = N-terminal L-leucyl-L-lysyl-[protein] + tRNA(Leu) + H(+). The enzyme catalyses N-terminal L-arginyl-[protein] + L-leucyl-tRNA(Leu) = N-terminal L-leucyl-L-arginyl-[protein] + tRNA(Leu) + H(+). It catalyses the reaction L-phenylalanyl-tRNA(Phe) + an N-terminal L-alpha-aminoacyl-[protein] = an N-terminal L-phenylalanyl-L-alpha-aminoacyl-[protein] + tRNA(Phe). In terms of biological role, functions in the N-end rule pathway of protein degradation where it conjugates Leu, Phe and, less efficiently, Met from aminoacyl-tRNAs to the N-termini of proteins containing an N-terminal arginine or lysine. This is Leucyl/phenylalanyl-tRNA--protein transferase from Gluconobacter oxydans (strain 621H) (Gluconobacter suboxydans).